We begin with the raw amino-acid sequence, 68 residues long: Large ribosomal subunit protein bL32 (68 aa).

Positions 1–21 (MAVQQNKVSKSRRNNRRAHDS) are disordered.

It belongs to the bacterial ribosomal protein bL32 family.

The polypeptide is Large ribosomal subunit protein bL32 (Roseobacter denitrificans (strain ATCC 33942 / OCh 114) (Erythrobacter sp. (strain OCh 114))).